The following is a 137-amino-acid chain: Large-conductance mechanosensitive channel (137 aa).

The next 2 helical transmembrane spans lie at 9–29 (AFAVKGNVVDMAVGIIIGAAF) and 79–99 (IQTILDFVIVAFAIFMGVKAI).

The protein belongs to the MscL family. Homopentamer.

Its subcellular location is the cell inner membrane. Its function is as follows. Channel that opens in response to stretch forces in the membrane lipid bilayer. May participate in the regulation of osmotic pressure changes within the cell. The chain is Large-conductance mechanosensitive channel from Pseudomonas aeruginosa (strain UCBPP-PA14).